A 384-amino-acid polypeptide reads, in one-letter code: Probable protein phosphatase 2C 48 (384 aa).

In terms of domain architecture, PPM-type phosphatase spans 47–358; the sequence is ITGEFSMAVV…DDITVIVVFL (312 aa). Phosphoserine is present on Ser78. Mn(2+) contacts are provided by Asp89, Gly90, Asp290, and Asp349.

This sequence belongs to the PP2C family. It depends on Mg(2+) as a cofactor. Mn(2+) serves as cofactor.

It catalyses the reaction O-phospho-L-seryl-[protein] + H2O = L-seryl-[protein] + phosphate. It carries out the reaction O-phospho-L-threonyl-[protein] + H2O = L-threonyl-[protein] + phosphate. Its function is as follows. May dephosphorylate and repress plasma membrane H(+)-ATPases (PM H(+)-ATPases, e.g. AHA1 and AHA2), thus influencing negatively plant growth and fitness. In Arabidopsis thaliana (Mouse-ear cress), this protein is Probable protein phosphatase 2C 48.